Here is a 301-residue protein sequence, read N- to C-terminus: tRNA dimethylallyltransferase (301 aa).

9–16 (GPTASGKS) contributes to the ATP binding site. 11 to 16 (TASGKS) contributes to the substrate binding site. Residues 34–37 (DSMQ) are interaction with substrate tRNA.

It belongs to the IPP transferase family. In terms of assembly, monomer. Mg(2+) serves as cofactor.

It catalyses the reaction adenosine(37) in tRNA + dimethylallyl diphosphate = N(6)-dimethylallyladenosine(37) in tRNA + diphosphate. Functionally, catalyzes the transfer of a dimethylallyl group onto the adenine at position 37 in tRNAs that read codons beginning with uridine, leading to the formation of N6-(dimethylallyl)adenosine (i(6)A). The polypeptide is tRNA dimethylallyltransferase (Corynebacterium glutamicum (strain R)).